Consider the following 466-residue polypeptide: Asparagine--tRNA ligase (466 aa).

It belongs to the class-II aminoacyl-tRNA synthetase family. Homodimer.

It localises to the cytoplasm. It carries out the reaction tRNA(Asn) + L-asparagine + ATP = L-asparaginyl-tRNA(Asn) + AMP + diphosphate + H(+). This chain is Asparagine--tRNA ligase, found in Shewanella loihica (strain ATCC BAA-1088 / PV-4).